Reading from the N-terminus, the 626-residue chain is Elongation factor 4 (626 aa).

The tr-type G domain occupies 14–195 (SVIRNFCIIA…QIVMDVPAPH (182 aa)). GTP-binding positions include 26–31 (DHGKST) and 142–145 (NKID). The interval 603-626 (LSTGEDSNDRDTKDKIRAAQKTEG) is disordered. The segment covering 609–626 (SNDRDTKDKIRAAQKTEG) has biased composition (basic and acidic residues).

Belongs to the TRAFAC class translation factor GTPase superfamily. Classic translation factor GTPase family. LepA subfamily.

It localises to the cell membrane. It catalyses the reaction GTP + H2O = GDP + phosphate + H(+). Functionally, required for accurate and efficient protein synthesis under certain stress conditions. May act as a fidelity factor of the translation reaction, by catalyzing a one-codon backward translocation of tRNAs on improperly translocated ribosomes. Back-translocation proceeds from a post-translocation (POST) complex to a pre-translocation (PRE) complex, thus giving elongation factor G a second chance to translocate the tRNAs correctly. Binds to ribosomes in a GTP-dependent manner. The chain is Elongation factor 4 from Bifidobacterium longum subsp. infantis (strain ATCC 15697 / DSM 20088 / JCM 1222 / NCTC 11817 / S12).